We begin with the raw amino-acid sequence, 593 residues long: MVNDASSISRSGYTQNPRLAEAAFEGVRKNTDFLKAADKAFKDVVATKAGDLKAGTKSGESAINTVGLKPPTDAAREKLSSEGQLTLLLGKLMTLLGDVSLSQLESRLAVWQAMIESQKEMGIQVSKEFQTALGEAQEATDLYEASIKKTDTAKSVYDAATKKLTQAQNKLQSLDPADPGYAQAEAAVEQAGKEATEAKEALDKATDATVKAGTDAKAKAEKADNILTKFQGTANAASQNQVSQGEQDNLSNVARLTMLMAMFIEIVGKNTEESLQNDLALFNALQEGRQAEMEKKSAEFQEETRKAEETNRIMGCIGKVLGALLTIVSVVAAVFTGGASLALAAVGLAVMVADEIVKAATGVSFIQQALNPIMEHVLKPLMELIGKAITKALEGLGVDKKTAEMAGSIVGAIVAAIAMVAVIVVVAVVGKGAAAKLGNALSKMMGETIKKLVPNVLKQLAQNGSKLFTQGMQRITSGLGNVGSKMGLQTNALSKELVGNTLNKVALGMEVTNTAAQSAGGVAEGVFIKNASEALADFMLARFAMDQIQQWLKQSVEIFGENQKVTAELQKAMSSAVQQNADASRFILRQSRA.

Coiled coils occupy residues 151 to 208 (DTAK…ATDA) and 287 to 314 (EGRQAEMEKKSAEFQEETRKAEETNRIM). The next 2 helical transmembrane spans lie at 330–350 (VVAAVFTGGASLALAAVGLAV) and 409–429 (IVGAIVAAIAMVAVIVVVAVV).

This sequence belongs to the SctE/SipB/YopB family. The core secretion machinery of the T3SS is composed of approximately 20 different proteins, including cytoplasmic components, a base, an export apparatus and a needle. This subunit is involved in the formation of a pore, called the translocon, in host membrane.

The protein resides in the secreted. It is found in the host membrane. In terms of biological role, component of the type III secretion system 1 (SPI-1 T3SS), also called injectisome, which is used to inject bacterial effector proteins into eukaryotic host cells. SipB/SctE1 and SipC/SctB are inserted into the host membrane where they form a pore and allow the translocation of effector proteins into the cytosol of target cells. The sequence is that of SPI-1 type 3 secretion system translocon protein SctE from Salmonella dublin.